A 425-amino-acid polypeptide reads, in one-letter code: Ribulose bisphosphate carboxylase (425 aa).

Residue K153 is the Proton acceptor of the active site. K155 contacts substrate. Positions 179, 181, and 182 each coordinate Mg(2+). N6-carboxylysine is present on K179. H269 (proton acceptor) is an active-site residue. Residues R270, H302, S353–G355, and Q375–G378 each bind substrate.

The protein belongs to the RuBisCO large chain family. Type III subfamily. Homodimer. In contrast to form I RuBisCO, the form III RuBisCO is composed solely of large subunits. Mg(2+) serves as cofactor.

It catalyses the reaction 2 (2R)-3-phosphoglycerate + 2 H(+) = D-ribulose 1,5-bisphosphate + CO2 + H2O. It carries out the reaction D-ribulose 1,5-bisphosphate + O2 = 2-phosphoglycolate + (2R)-3-phosphoglycerate + 2 H(+). Its activity is regulated as follows. Reversibly inhibited by O(2). Catalyzes the addition of molecular CO(2) and H(2)O to ribulose 1,5-bisphosphate (RuBP), generating two molecules of 3-phosphoglycerate (3-PGA). Functions in an archaeal AMP degradation pathway, together with AMP phosphorylase and R15P isomerase. This Methanocaldococcus jannaschii (strain ATCC 43067 / DSM 2661 / JAL-1 / JCM 10045 / NBRC 100440) (Methanococcus jannaschii) protein is Ribulose bisphosphate carboxylase.